A 387-amino-acid chain; its full sequence is S-adenosylmethionine synthase (387 aa).

His-16 contacts ATP. Asp-18 is a binding site for Mg(2+). Glu-44 contacts K(+). Residues Glu-57 and Gln-100 each contribute to the L-methionine site. The tract at residues 100-110 (QSPDIAQGVDR) is flexible loop. ATP contacts are provided by residues 167–169 (DAK), 232–233 (RF), Asp-241, 247–248 (RK), Ala-264, and Lys-268. Asp-241 contributes to the L-methionine binding site. Lys-272 contributes to the L-methionine binding site.

This sequence belongs to the AdoMet synthase family. Homotetramer; dimer of dimers. The cofactor is Mg(2+). Requires K(+) as cofactor.

The protein resides in the cytoplasm. It carries out the reaction L-methionine + ATP + H2O = S-adenosyl-L-methionine + phosphate + diphosphate. Its pathway is amino-acid biosynthesis; S-adenosyl-L-methionine biosynthesis; S-adenosyl-L-methionine from L-methionine: step 1/1. Functionally, catalyzes the formation of S-adenosylmethionine (AdoMet) from methionine and ATP. The overall synthetic reaction is composed of two sequential steps, AdoMet formation and the subsequent tripolyphosphate hydrolysis which occurs prior to release of AdoMet from the enzyme. This Cupriavidus metallidurans (strain ATCC 43123 / DSM 2839 / NBRC 102507 / CH34) (Ralstonia metallidurans) protein is S-adenosylmethionine synthase.